A 224-amino-acid polypeptide reads, in one-letter code: MRHGTHTGSNPYAEAYVEVTAGGLAETDLAADPIEQFRRWLADAIRYNLPEPTAMVVATADADGRPSSRHVLLKSVDDGFVFFTNYRSRKGRDLSENPSASLCFPWFAIGRQVVVLGTVTKVTREETEEYFASRPRDSQCGAWSSENQSSVVPSRAWLDERYAEVAQRFAGVEHIPPPPFWGGFRVIPETVEFWQARPARMHDRLRYRRTADGERPWIIERLSP.

Residues 69-74 (RHVLLK), 83-84 (FT), R89, K90, and Q112 each bind FMN. K74 contributes to the substrate binding site. Substrate-binding residues include Y130, R134, and S138. Residues 148-149 (QS) and W194 contribute to the FMN site. Substrate is bound at residue 200–202 (RMH). Position 204 (R204) interacts with FMN.

The protein belongs to the pyridoxamine 5'-phosphate oxidase family. As to quaternary structure, homodimer. Requires FMN as cofactor.

It catalyses the reaction pyridoxamine 5'-phosphate + O2 + H2O = pyridoxal 5'-phosphate + H2O2 + NH4(+). The enzyme catalyses pyridoxine 5'-phosphate + O2 = pyridoxal 5'-phosphate + H2O2. Its pathway is cofactor metabolism; pyridoxal 5'-phosphate salvage; pyridoxal 5'-phosphate from pyridoxamine 5'-phosphate: step 1/1. The protein operates within cofactor metabolism; pyridoxal 5'-phosphate salvage; pyridoxal 5'-phosphate from pyridoxine 5'-phosphate: step 1/1. Functionally, catalyzes the oxidation of either pyridoxine 5'-phosphate (PNP) or pyridoxamine 5'-phosphate (PMP) into pyridoxal 5'-phosphate (PLP). In Acidothermus cellulolyticus (strain ATCC 43068 / DSM 8971 / 11B), this protein is Pyridoxine/pyridoxamine 5'-phosphate oxidase.